The chain runs to 357 residues: MSQSGKNGLTYSDAGVDIDAGNLMVEKIKPAVRSTRRPGADGEIGGFGGLFDLKAAGFTDPVLVAANDGVGTKLKIAIDADYHDTVGIDLVAMCVNDLVVQGAEPLFFLDYFATGKLDPDQGAAIVSGIAAGCRESGCALIGGETAEMPGMYSDGDYDLAGFAVGAAERGQLLPAGDIAEGDVILGLSSSGVHSNGFSLVRKIVSLSGLEWSAPAPFADGKKLGEALLTPTRIYVKPLLKAIRETGALKALAHITGGGFPENIPRVLPKHLAAEIDLAAIKVPAVFSWLAKTGGVEAHEMLRTFNCGVGMIVVVSAENATKVTEALTAEGETVFPLGRMVAREDGAHGTIYKGTLGL.

This sequence belongs to the AIR synthase family.

It is found in the cytoplasm. The catalysed reaction is 2-formamido-N(1)-(5-O-phospho-beta-D-ribosyl)acetamidine + ATP = 5-amino-1-(5-phospho-beta-D-ribosyl)imidazole + ADP + phosphate + H(+). It functions in the pathway purine metabolism; IMP biosynthesis via de novo pathway; 5-amino-1-(5-phospho-D-ribosyl)imidazole from N(2)-formyl-N(1)-(5-phospho-D-ribosyl)glycinamide: step 2/2. This is Phosphoribosylformylglycinamidine cyclo-ligase from Agrobacterium fabrum (strain C58 / ATCC 33970) (Agrobacterium tumefaciens (strain C58)).